The primary structure comprises 640 residues: Threonine--tRNA ligase (640 aa).

A TGS domain is found at 1–61; sequence MPTITLPDGS…DSDATLQIIT (61 aa). Positions 242-533 are catalytic; it reads DHRKIGKRLG…LIEHYEGAFP (292 aa). Zn(2+)-binding residues include Cys-333, His-384, and His-510.

It belongs to the class-II aminoacyl-tRNA synthetase family. Homodimer. It depends on Zn(2+) as a cofactor.

The protein localises to the cytoplasm. It catalyses the reaction tRNA(Thr) + L-threonine + ATP = L-threonyl-tRNA(Thr) + AMP + diphosphate + H(+). In terms of biological role, catalyzes the attachment of threonine to tRNA(Thr) in a two-step reaction: L-threonine is first activated by ATP to form Thr-AMP and then transferred to the acceptor end of tRNA(Thr). Also edits incorrectly charged L-seryl-tRNA(Thr). The polypeptide is Threonine--tRNA ligase (Pseudomonas fluorescens (strain Pf0-1)).